Here is a 408-residue protein sequence, read N- to C-terminus: Peptidase T (408 aa).

Histidine 78 is a binding site for Zn(2+). The active site involves aspartate 80. A Zn(2+)-binding site is contributed by aspartate 140. Residue glutamate 173 is the Proton acceptor of the active site. Zn(2+) contacts are provided by glutamate 174, aspartate 196, and histidine 379.

The protein belongs to the peptidase M20B family. Requires Zn(2+) as cofactor.

Its subcellular location is the cytoplasm. It carries out the reaction Release of the N-terminal residue from a tripeptide.. Its function is as follows. Cleaves the N-terminal amino acid of tripeptides. This Citrobacter koseri (strain ATCC BAA-895 / CDC 4225-83 / SGSC4696) protein is Peptidase T.